The sequence spans 119 residues: UPF0102 protein Nther_1376 (119 aa).

This sequence belongs to the UPF0102 family.

This chain is UPF0102 protein Nther_1376, found in Natranaerobius thermophilus (strain ATCC BAA-1301 / DSM 18059 / JW/NM-WN-LF).